A 201-amino-acid chain; its full sequence is Recombination protein RecR (201 aa).

The C4-type zinc-finger motif lies at 60-75 (CSCCGNVDTSDPCTIC). One can recognise a Toprim domain in the interval 83–178 (ATLIVVEDVS…RVTRLAHGVP (96 aa)).

This sequence belongs to the RecR family.

Functionally, may play a role in DNA repair. It seems to be involved in an RecBC-independent recombinational process of DNA repair. It may act with RecF and RecO. The protein is Recombination protein RecR of Brucella ovis (strain ATCC 25840 / 63/290 / NCTC 10512).